Consider the following 144-residue polypeptide: Cytochrome c oxidase subunit 4 isoform 1, mitochondrial (144 aa).

At 1–73 (SVVKSEDFSL…SFAEMNRGSN (73 aa)) the chain is on the mitochondrial matrix side. At K4 the chain carries N6-acetyllysine; alternate. At K4 the chain carries N6-succinyllysine; alternate. An N6-acetyllysine modification is found at K28. Phosphoserine occurs at positions 31 and 33. At K35 the chain carries N6-acetyllysine; alternate. N6-succinyllysine; alternate is present on K35. K42 is subject to N6-acetyllysine. Residues 74–99 (EWKTVVGGAMFFIGFTALIIMWQKRH) form a helical membrane-spanning segment. The Mitochondrial intermembrane segment spans residues 100–144 (VYGPLPQSFDKEWVAKQTKRMLDMKVNPIQGLASKWDYEKNEWKK).

Belongs to the cytochrome c oxidase IV family. In terms of assembly, component of the cytochrome c oxidase (complex IV, CIV), a multisubunit enzyme composed of 14 subunits. The complex is composed of a catalytic core of 3 subunits MT-CO1, MT-CO2 and MT-CO3, encoded in the mitochondrial DNA, and 11 supernumerary subunits COX4I, COX5A, COX5B, COX6A, COX6B, COX6C, COX7A, COX7B, COX7C, COX8 and NDUFA4, which are encoded in the nuclear genome. The complex exists as a monomer or a dimer and forms supercomplexes (SCs) in the inner mitochondrial membrane with NADH-ubiquinone oxidoreductase (complex I, CI) and ubiquinol-cytochrome c oxidoreductase (cytochrome b-c1 complex, complex III, CIII), resulting in different assemblies (supercomplex SCI(1)III(2)IV(1) and megacomplex MCI(2)III(2)IV(2)). Interacts with PHB2; the interaction decreases in absence of SPHK2. Interacts with AFG1L. Interacts with ABCB7; this interaction allows the regulation of cellular iron homeostasis and cellular reactive oxygen species (ROS) levels in cardiomyocytes. Interacts with FLVCR2; this interaction occurs in the absence of heme and is disrupted upon heme binding. Interacts with IRGC.

The protein resides in the mitochondrion inner membrane. It functions in the pathway energy metabolism; oxidative phosphorylation. Component of the cytochrome c oxidase, the last enzyme in the mitochondrial electron transport chain which drives oxidative phosphorylation. The respiratory chain contains 3 multisubunit complexes succinate dehydrogenase (complex II, CII), ubiquinol-cytochrome c oxidoreductase (cytochrome b-c1 complex, complex III, CIII) and cytochrome c oxidase (complex IV, CIV), that cooperate to transfer electrons derived from NADH and succinate to molecular oxygen, creating an electrochemical gradient over the inner membrane that drives transmembrane transport and the ATP synthase. Cytochrome c oxidase is the component of the respiratory chain that catalyzes the reduction of oxygen to water. Electrons originating from reduced cytochrome c in the intermembrane space (IMS) are transferred via the dinuclear copper A center (CU(A)) of subunit 2 and heme A of subunit 1 to the active site in subunit 1, a binuclear center (BNC) formed by heme A3 and copper B (CU(B)). The BNC reduces molecular oxygen to 2 water molecules using 4 electrons from cytochrome c in the IMS and 4 protons from the mitochondrial matrix. The protein is Cytochrome c oxidase subunit 4 isoform 1, mitochondrial (COX4I1) of Pongo pygmaeus (Bornean orangutan).